A 432-amino-acid polypeptide reads, in one-letter code: uncharacterized protein (432 aa).

Transmembrane regions (helical) follow at residues 7–27 (FIGLGIITASLIFGSSLPDIY), 29–49 (GIVILIVAGCLWFFELLPLPV), 68–88 (EALTYFAHPIIFLFLGGFMLA), 124–144 (FLSMWISNTSATLILLPIALG), 156–176 (FLLLGVAYSASIGGIATIIGS), 196–216 (VGFPISLLLFLICTLTLYIYF), 241–261 (LVIFVLIASLWIISDYLSEIF), 266–286 (FDSVIAIFAIILLFVFNLVEV), 291–311 (KIDWGTLILFGGALCLGGVIV), 326–346 (ILGNLTPIVLLFLVVTITIIL), 358–378 (IIVPILFGVSLGIPKEILILA), 379–399 (VGMSASCSFILPVGTPPNAIV), and 412–432 (IGMILSILSAAVITLYSILYL).

This sequence belongs to the CitM (TC 2.A.11) transporter family.

The protein resides in the cell membrane. This is an uncharacterized protein from Methanocaldococcus jannaschii (strain ATCC 43067 / DSM 2661 / JAL-1 / JCM 10045 / NBRC 100440) (Methanococcus jannaschii).